A 280-amino-acid polypeptide reads, in one-letter code: UDP-3-O-acyl-N-acetylglucosamine deacetylase (280 aa).

Residues H77, H238, and D242 each coordinate Zn(2+). The Proton donor role is filled by H265.

The protein belongs to the LpxC family. Zn(2+) serves as cofactor.

The catalysed reaction is a UDP-3-O-[(3R)-3-hydroxyacyl]-N-acetyl-alpha-D-glucosamine + H2O = a UDP-3-O-[(3R)-3-hydroxyacyl]-alpha-D-glucosamine + acetate. It participates in glycolipid biosynthesis; lipid IV(A) biosynthesis; lipid IV(A) from (3R)-3-hydroxytetradecanoyl-[acyl-carrier-protein] and UDP-N-acetyl-alpha-D-glucosamine: step 2/6. Functionally, catalyzes the hydrolysis of UDP-3-O-myristoyl-N-acetylglucosamine to form UDP-3-O-myristoylglucosamine and acetate, the committed step in lipid A biosynthesis. The protein is UDP-3-O-acyl-N-acetylglucosamine deacetylase of Nostoc sp. (strain PCC 7120 / SAG 25.82 / UTEX 2576).